The primary structure comprises 195 residues: Thioredoxin reductase-like selenoprotein T (195 aa).

Residues 1–19 (MRLLLLLLVAASAMVRSEA) form the signal peptide. Positions 46–49 (CVSU) form a cross-link, cysteinyl-selenocysteine (Cys-Sec). Residue Sec49 is a non-standard amino acid, selenocysteine. Residues 85–103 (IASFLSVFKLVLIGLIIVG) traverse the membrane as a helical segment.

It belongs to the SelWTH family. Selenoprotein T subfamily. Post-translationally, may contain a selenide-sulfide bond between Cys-46 and Sec-49. This bond is speculated to serve as redox-active pair. As to expression, ubiquitous. Highly expressed in the endocrine pancreas.

The protein resides in the endoplasmic reticulum membrane. It carries out the reaction [thioredoxin]-dithiol + NADP(+) = [thioredoxin]-disulfide + NADPH + H(+). Selenoprotein with thioredoxin reductase-like oxidoreductase activity. Protects dopaminergic neurons against oxidative stress and cell death. Involved in ADCYAP1/PACAP-induced calcium mobilization and neuroendocrine secretion. Plays a role in fibroblast anchorage and redox regulation. In gastric smooth muscle, modulates the contraction processes through the regulation of calcium release and MYLK activation. In pancreatic islets, involved in the control of glucose homeostasis, contributes to prolonged ADCYAP1/PACAP-induced insulin secretion. This chain is Thioredoxin reductase-like selenoprotein T, found in Homo sapiens (Human).